The following is a 326-amino-acid chain: Light-induced protein, chloroplastic (326 aa).

A chloroplast-targeting transit peptide spans 1–63 (MASISSLNQI…TNPKPKFTAQ (63 aa)).

The protein belongs to the LIPC family. Associates with the major light-harvesting antenna complex polypeptides of the PSII oxygen-evolving complex. As to expression, expressed in leaves.

The protein localises to the plastid. Its subcellular location is the chloroplast thylakoid membrane. In terms of biological role, required for normal plant growth. May be both photoprotective and play an ancillary role in photosynthesis. May structurally stabilize thylakoids during osmotic and oxidative stress. The polypeptide is Light-induced protein, chloroplastic (Solanum tuberosum (Potato)).